A 103-amino-acid chain; its full sequence is Small ribosomal subunit protein uS10 (103 aa).

The protein belongs to the universal ribosomal protein uS10 family. Part of the 30S ribosomal subunit.

Its function is as follows. Involved in the binding of tRNA to the ribosomes. The protein is Small ribosomal subunit protein uS10 of Campylobacter hominis (strain ATCC BAA-381 / DSM 21671 / CCUG 45161 / LMG 19568 / NCTC 13146 / CH001A).